The chain runs to 90 residues: Conotoxin Ca8.2 (90 aa).

Positions 1 to 21 (MMLKMGAMFVLLLLFILPSSQ) are cleaved as a signal peptide. Residues 22–46 (QEGDVQARKTHLKRGFYGTLAMSTR) constitute a propeptide that is removed on maturation. Gln89 carries the glutamine amide modification.

Belongs to the conotoxin S superfamily. In terms of processing, contains 5 disulfide bonds. In terms of tissue distribution, expressed by the venom duct.

The protein resides in the secreted. The polypeptide is Conotoxin Ca8.2 (Conus caracteristicus (Characteristic cone)).